Here is a 71-residue protein sequence, read N- to C-terminus: Cell division protein ZapB (71 aa).

Positions 5 to 67 form a coiled coil; it reads LEVLEQLESK…RALLGKMEQM (63 aa).

This sequence belongs to the ZapB family. Homodimer. The ends of the coiled-coil dimer bind to each other, forming polymers. Interacts with FtsZ.

The protein resides in the cytoplasm. In terms of biological role, non-essential, abundant cell division factor that is required for proper Z-ring formation. It is recruited early to the divisome by direct interaction with FtsZ, stimulating Z-ring assembly and thereby promoting cell division earlier in the cell cycle. Its recruitment to the Z-ring requires functional FtsA or ZipA. In Aeromonas salmonicida (strain A449), this protein is Cell division protein ZapB.